The sequence spans 1288 residues: CLIP-associating protein 2 (1288 aa).

Residues methionine 1–glycine 62 form a disordered region. Composition is skewed to low complexity over residues glycine 19–proline 32 and glutamate 40–glycine 62. Positions glycine 62–serine 312 are TOG 1. HEAT repeat units lie at residues histidine 174–threonine 209, histidine 210–threonine 246, and arginine 251–glycine 288. 2 disordered regions span residues serine 314 to leucine 571 and alanine 614 to isoleucine 634. 2 stretches are compositionally biased toward low complexity: residues serine 317–serine 337 and proline 347–serine 358. 2 stretches are compositionally biased toward polar residues: residues lysine 406–aspartate 421 and threonine 468–glutamine 478. The short motif at serine 490–proline 493 is the SXIP motif 1 element. Residues glutamine 496 to tyrosine 518 are compositionally biased toward polar residues. Residues serine 527–proline 530 carry the SXIP motif 2 motif. Residues serine 616–arginine 630 show a composition bias toward low complexity. A TOG 2 region spans residues methionine 638–asparagine 889. HEAT repeat units follow at residues arginine 718–alanine 755 and leucine 780–proline 817. Polar residues predominate over residues glycine 891–serine 900. Disordered regions lie at residues glycine 891 to aspartate 936 and serine 960 to valine 1047. Residues serine 912 to serine 931 show a composition bias toward low complexity. Over residues serine 963–aspartate 977 the composition is skewed to basic and acidic residues. The segment covering serine 1019–lysine 1030 has biased composition (low complexity). The span at aspartate 1036 to glycine 1046 shows a compositional bias: acidic residues. 4 HEAT repeats span residues valine 1047 to leucine 1086, glutamate 1091 to tryptophan 1128, isoleucine 1167 to lysine 1204, and glutamine 1209 to glutamate 1246.

The protein belongs to the CLASP family. As to quaternary structure, interacts with microtubules.

It is found in the cytoplasm. The protein localises to the cytoskeleton. The protein resides in the microtubule organizing center. It localises to the centrosome. Its subcellular location is the chromosome. It is found in the centromere. The protein localises to the kinetochore. The protein resides in the spindle. It localises to the golgi apparatus. Its subcellular location is the trans-Golgi network. It is found in the cell membrane. The protein localises to the cell projection. The protein resides in the ruffle membrane. Functionally, microtubule plus-end tracking protein that promotes the stabilization of dynamic microtubules. Involved in the nucleation of noncentrosomal microtubules originating from the trans-Golgi network (TGN). Required for the polarization of the cytoplasmic microtubule arrays in migrating cells towards the leading edge of the cell. May act at the cell cortex to enhance the frequency of rescue of depolymerizing microtubules. This cortical microtubule stabilizing activity is regulated at least in part by phosphatidylinositol 3-kinase signaling. Also performs a similar stabilizing function at the kinetochore which is essential for the bipolar alignment of chromosomes on the mitotic spindle. This is CLIP-associating protein 2 (clasp2) from Danio rerio (Zebrafish).